A 988-amino-acid polypeptide reads, in one-letter code: Exportin-T (988 aa).

Belongs to the exportin family. Expressed in young leaves, growing leaf blades, young floral organs and root tips.

Its subcellular location is the nucleus. It is found in the cytoplasm. Its function is as follows. Probable tRNA nucleus export receptor which regulates tRNA processing and facilitates tRNA translocation across the nuclear pore complex. Is required for proper activity of the shoot apical meristem (SAM) and correct leaf initiation at different developmental stages, and may play a role in floral patterning. The chain is Exportin-T (PSD) from Arabidopsis thaliana (Mouse-ear cress).